Reading from the N-terminus, the 502-residue chain is MEKEDQEKTGKLTLVLALATFLAAFGSSFQYGYNVAAVNSPSEFMQQFYNDTYYDRNKENIESFTLTLLWSLTVSMFPFGGFIGSLMVGFLVNNLGRKGALLFNNIFSILPAILMGCSKIAKSFEIIIASRLLVGICAGISSNVVPMYLGELAPKNLRGALGVVPQLFITVGILVAQLFGLRSVLASEEGWPILLGLTGVPAGLQLLLLPFFPESPRYLLIQKKNESAAEKALQTLRGWKDVDMEMEEIRKEDEAEKAAGFISVWKLFRMQSLRWQLISTIVLMAGQQLSGVNAIYYYADQIYLSAGVKSNDVQYVTAGTGAVNVFMTMVTVFVVELWGRRNLLLIGFSTCLTACIVLTVALALQNTISWMPYVSIVCVIVYVIGHAVGPSPIPALFITEIFLQSSRPSAYMIGGSVHWLSNFIVGLIFPFIQVGLGPYSFIIFAIICLLTTIYIFMVVPETKGRTFVEINQIFAKKNKVSDVYPEKEEKELNDLPPATREQ.

An N-acetylmethionine modification is found at methionine 1. The Cytoplasmic segment spans residues methionine 1–alanine 17. The helical transmembrane segment at leucine 18–valine 38 threads the bilayer. A D-fructose-binding site is contributed by tyrosine 31. Residues asparagine 39–threonine 67 are Extracellular-facing. The N-linked (GlcNAc...) asparagine glycan is linked to asparagine 50. A helical transmembrane segment spans residues leucine 68–phenylalanine 90. Residues leucine 91–arginine 97 are Cytoplasmic-facing. The helical transmembrane segment at lysine 98–serine 118 threads the bilayer. The Extracellular segment spans residues lysine 119–glutamate 125. Residues isoleucine 126–tyrosine 148 traverse the membrane as a helical segment. The Cytoplasmic segment spans residues leucine 149–alanine 160. The helical transmembrane segment at leucine 161 to leucine 181 threads the bilayer. Residue glutamine 166 participates in D-fructose binding. At arginine 182 to tryptophan 191 the chain is on the extracellular side. Residues proline 192–phenylalanine 212 traverse the membrane as a helical segment. Over proline 213–glutamine 276 the chain is Cytoplasmic. A helical membrane pass occupies residues leucine 277–tyrosine 297. Residues glutamine 287 and isoleucine 295–tyrosine 297 each bind D-fructose. Topologically, residues tyrosine 298 to aspartate 312 are extracellular. A helical transmembrane segment spans residues valine 313–phenylalanine 333. At valine 334–arginine 341 the chain is on the cytoplasmic side. Residues asparagine 342–leucine 362 form a helical membrane-spanning segment. The Extracellular segment spans residues alanine 363–tryptophan 370. Residues methionine 371–isoleucine 393 traverse the membrane as a helical segment. Position 386 (histidine 386) interacts with D-fructose. Residues proline 394–tyrosine 411 lie on the Cytoplasmic side of the membrane. The helical transmembrane segment at methionine 412 to isoleucine 432 threads the bilayer. Histidine 418 to tryptophan 419 lines the D-fructose pocket. Residues glutamine 433–proline 438 are Extracellular-facing. The helical transmembrane segment at tyrosine 439–valine 459 threads the bilayer. Residues proline 460–glutamine 502 are Cytoplasmic-facing.

It belongs to the major facilitator superfamily. Sugar transporter (TC 2.A.1.1) family. Glucose transporter subfamily. Detected in jejunum. Detected in kidney, skeletal muscle, brain and adipose tissue (at protein level). Detected in small intestine and in kidney, and at much lower levels in brain. Detected in enterocytes in duodenum, jejunum, and ileum.

Its subcellular location is the apical cell membrane. The protein resides in the cell membrane. It is found in the sarcolemma. The enzyme catalyses D-fructose(out) = D-fructose(in). Fructose uptake is inhibited by mercury ions. Fructose uptake is only slightly inhibited by cytochalasin B. Its function is as follows. Functions as a fructose transporter that has only low activity with other monosaccharides. Can mediate the uptake of deoxyglucose, but with low efficiency. Essential for fructose uptake in the small intestine. Plays a role in the regulation of salt uptake and blood pressure in response to dietary fructose. Required for the development of high blood pressure in response to high dietary fructose intake. The protein is Solute carrier family 2, facilitated glucose transporter member 5 of Rattus norvegicus (Rat).